The sequence spans 919 residues: Protein phosphatase 1 regulatory subunit 37 (919 aa).

LRR repeat units lie at residues 340–361 (SLQY…FVAR), 368–388 (SLTV…MLLA), 396–417 (NLRE…AQLG), 425–445 (NIQI…AYVC), 454–474 (GLVT…GYLA), and 482–502 (SLET…HKLK). 2 disordered regions span residues 626–716 (ATED…TIPS) and 790–866 (APSQ…APLP). The span at 631-640 (THEEEEEEEA) shows a compositional bias: acidic residues. Positions 641-658 (SPLKKIEEETTDALKDAT) are enriched in basic and acidic residues. Positions 677–690 (PQDDSDSDTEDEET) are enriched in acidic residues. The span at 691–701 (PTNTSLTSTSP) shows a compositional bias: low complexity. 2 stretches are compositionally biased toward polar residues: residues 791–801 (PSQTQNSTQPT) and 811–837 (DAQQ…LTES). Residues 833–861 (QLTESVSEEEQKKAETLNNEADINEDANT) adopt a coiled-coil conformation.

The protein belongs to the PPP1R37 family.

Its function is as follows. May inhibit phosphatase activity of protein phosphatase 1 (PP1) complexes. The protein is Protein phosphatase 1 regulatory subunit 37 (ppp1r37) of Danio rerio (Zebrafish).